Here is a 435-residue protein sequence, read N- to C-terminus: NADH-quinone oxidoreductase subunit D (435 aa).

This sequence belongs to the complex I 49 kDa subunit family. In terms of assembly, NDH-1 is composed of 14 different subunits. Subunits NuoB, C, D, E, F, and G constitute the peripheral sector of the complex.

Its subcellular location is the cell inner membrane. It carries out the reaction a quinone + NADH + 5 H(+)(in) = a quinol + NAD(+) + 4 H(+)(out). Its function is as follows. NDH-1 shuttles electrons from NADH, via FMN and iron-sulfur (Fe-S) centers, to quinones in the respiratory chain. The immediate electron acceptor for the enzyme in this species is believed to be ubiquinone. Couples the redox reaction to proton translocation (for every two electrons transferred, four hydrogen ions are translocated across the cytoplasmic membrane), and thus conserves the redox energy in a proton gradient. The sequence is that of NADH-quinone oxidoreductase subunit D from Xylella fastidiosa (strain 9a5c).